Consider the following 58-residue polypeptide: Large ribosomal subunit protein eL37 (58 aa).

The segment covering Met-1–His-17 has biased composition (polar residues). The tract at residues Met-1–Lys-26 is disordered. 4 residues coordinate Zn(2+): Cys-20, Cys-23, Cys-35, and Cys-38. Residues Cys-20–Cys-38 form a C4-type zinc finger.

The protein belongs to the eukaryotic ribosomal protein eL37 family. Zn(2+) is required as a cofactor.

Binds to the 23S rRNA. This chain is Large ribosomal subunit protein eL37, found in Halobacterium salinarum (strain ATCC 29341 / DSM 671 / R1).